The sequence spans 524 residues: MGIVINLFLIIAASIVFFVVGFYIGRFFLERIGTTKVLEAEERAVQVIQEAQKEANDYKELKVNEVNQEWKKRKREFDSEVTIKNNKFAQLQKQIRQKEVTLANQMRDIKETEKKLQEQREELKHQTQNVQNRSAELEKTILEQNQRLESISNLTAEEARQMLIDNMIAKAREEAAETVHQIHEEATQKADRIAEKIMLTAIQRISFEQATESALSVVHIQSDELKGRIIGREGRNIKAFENATGVDIIVDDTPEVVILSCFDPLRREMAKLTLQKLLVDGIIHPVAIEKAYQDAKKEIEDVIMSSGEEAISSLQIPDMPAEIVNLIGKMRFHTVYGQNLLQHSREVAMLAGLMAAELKLDAKQAKRAGLLHDIGLVLPETEMPHALAGMEFLKKFNMSPVVLNAIGAHHGEVEKASPIADLVDAANIVSLSRPGARGAVTAEGNVKRLESLEEIARTFPGVIKTYALQAGREIRVIVEGDNVSDSQADVLAHDIASKIESEAQYPGQIKVTILREKRSVAFAK.

Residues 2-22 traverse the membrane as a helical segment; that stretch reads GIVINLFLIIAASIVFFVVGF. Residues 214-299 enclose the KH domain; the sequence is ALSVVHIQSD…KAYQDAKKEI (86 aa). Residues 340-432 form the HD domain; sequence LLQHSREVAM…VDAANIVSLS (93 aa).

The protein belongs to the RNase Y family.

The protein resides in the cell membrane. Its function is as follows. Endoribonuclease that initiates mRNA decay. In Chlorobaculum tepidum (strain ATCC 49652 / DSM 12025 / NBRC 103806 / TLS) (Chlorobium tepidum), this protein is Ribonuclease Y.